Here is a 186-residue protein sequence, read N- to C-terminus: uncharacterized protein (186 aa).

The N-terminal stretch at 1–18 (MNKFLFAAALIVSGLLVG) is a signal peptide. A lipid anchor (N-palmitoyl cysteine) is attached at C19. C19 carries the S-diacylglycerol cysteine lipid modification.

It is found in the cell membrane. This is an uncharacterized protein from Escherichia coli (strain K12).